We begin with the raw amino-acid sequence, 132 residues long: Small ribosomal subunit protein eS12 (132 aa).

This sequence belongs to the eukaryotic ribosomal protein eS12 family.

The protein resides in the cytoplasm. This is Small ribosomal subunit protein eS12 (rps12) from Xenopus laevis (African clawed frog).